Consider the following 399-residue polypeptide: Tryptophan synthase beta chain (399 aa).

Residue Lys-90 is modified to N6-(pyridoxal phosphate)lysine.

Belongs to the TrpB family. As to quaternary structure, tetramer of two alpha and two beta chains. Pyridoxal 5'-phosphate serves as cofactor.

The enzyme catalyses (1S,2R)-1-C-(indol-3-yl)glycerol 3-phosphate + L-serine = D-glyceraldehyde 3-phosphate + L-tryptophan + H2O. The protein operates within amino-acid biosynthesis; L-tryptophan biosynthesis; L-tryptophan from chorismate: step 5/5. The beta subunit is responsible for the synthesis of L-tryptophan from indole and L-serine. The protein is Tryptophan synthase beta chain of Bacillus pumilus (strain SAFR-032).